The primary structure comprises 207 residues: Small ribosomal subunit protein uS4 (207 aa).

Residues 26–53 (KPFDVKTKKHAKAPGQHGQARGKQSEYS) form a disordered region. Residues 97 to 159 (SRLDNVVYRM…AKQQLRIKNA (63 aa)) enclose the S4 RNA-binding domain.

This sequence belongs to the universal ribosomal protein uS4 family. As to quaternary structure, part of the 30S ribosomal subunit. Contacts protein S5. The interaction surface between S4 and S5 is involved in control of translational fidelity.

One of the primary rRNA binding proteins, it binds directly to 16S rRNA where it nucleates assembly of the body of the 30S subunit. Functionally, with S5 and S12 plays an important role in translational accuracy. The sequence is that of Small ribosomal subunit protein uS4 from Acinetobacter baylyi (strain ATCC 33305 / BD413 / ADP1).